Here is an 883-residue protein sequence, read N- to C-terminus: Translation initiation factor IF-2 (883 aa).

The interval 118 to 261 is disordered; the sequence is VARESEAAPA…KKKEAFKKTE (144 aa). The span at 124–150 shows a compositional bias: low complexity; that stretch reads AAPAEEPVAAAVKPASEPPVVQKAPVA. Basic and acidic residues-rich tracts occupy residues 183–200 and 252–261; these read PADR…EERI and KKKEAFKKTE. The 170-residue stretch at 383-552 folds into the tr-type G domain; sequence KRPPVVTIMG…LLQADVMDLK (170 aa). Residues 392–399 are G1; that stretch reads GHVDHGKT. 392-399 provides a ligand contact to GTP; sequence GHVDHGKT. A G2 region spans residues 417–421; it reads GITQH. A G3 region spans residues 438-441; that stretch reads DTPG. GTP is bound by residues 438 to 442 and 492 to 495; these read DTPGH and NKID. Residues 492 to 495 form a G4 region; it reads NKID. Residues 528-530 form a G5 region; the sequence is SAK.

It belongs to the TRAFAC class translation factor GTPase superfamily. Classic translation factor GTPase family. IF-2 subfamily.

The protein resides in the cytoplasm. Its function is as follows. One of the essential components for the initiation of protein synthesis. Protects formylmethionyl-tRNA from spontaneous hydrolysis and promotes its binding to the 30S ribosomal subunits. Also involved in the hydrolysis of GTP during the formation of the 70S ribosomal complex. This Geobacter sulfurreducens (strain ATCC 51573 / DSM 12127 / PCA) protein is Translation initiation factor IF-2.